The following is a 308-amino-acid chain: Olfactory receptor 5H8 (308 aa).

The Extracellular segment spans residues 1–28; that stretch reads MDDENATLLTEFVLTGLTYQSEWKIPLF. A helical membrane pass occupies residues 29 to 49; the sequence is LAFLVIYLITIMANLGLIAVI. Topologically, residues 50–56 are cytoplasmic; it reads WKDSHLH. The chain crosses the membrane as a helical span at residues 57 to 77; sequence IPMYLFLGSLAFVDAWLSSSV. The Extracellular segment spans residues 78–98; the sequence is TPKMLISFLAKSMIISVSECK. A disulfide bridge connects residues C97 and C179. A helical membrane pass occupies residues 99 to 119; it reads IQFFSFGISGTTECFLLATMA. Residues 120–133 lie on the Cytoplasmic side of the membrane; that stretch reads YDRYVAICKPLLYP. A helical transmembrane segment spans residues 134–154; it reads VIMTNGLCIWLLVLSFIGGFL. Residues 155-195 are Extracellular-facing; that stretch reads HALIHEGILFRLTFCNSNIIHHFYCDIIPLLKISCTDPSIN. A helical transmembrane segment spans residues 196 to 216; it reads FLMLFILSGSIQVFTILTVLV. Residues 217-238 lie on the Cytoplasmic side of the membrane; it reads SYTFVLFTILKKKAKDIRKAFS. A helical transmembrane segment spans residues 239-259; sequence TCGAHLLSVSLYYGPLLFMYV. Residues 260 to 270 lie on the Extracellular side of the membrane; it reads HPASPQADDQD. Residues 271-291 traverse the membrane as a helical segment; it reads MVESLFYTVIIPFLNPIIYSL. Over 292–308 the chain is Cytoplasmic; that stretch reads RNKQVIDSLTKTLKGNV.

Belongs to the G-protein coupled receptor 1 family.

The protein localises to the cell membrane. Its function is as follows. Odorant receptor. The chain is Olfactory receptor 5H8 from Homo sapiens (Human).